Reading from the N-terminus, the 90-residue chain is Antitoxin epsilon 2 (90 aa).

This sequence belongs to the epsilon antitoxin family. In terms of assembly, in the presence of the zeta toxin, forms an inactive PezA(2)PezT(2) heterotetramer.

In terms of biological role, antitoxin component of a type II toxin-antitoxin (TA) system. Neutralizes the toxic effect of zeta toxin. Part of a postsegregational killing (PSK) system involved in the killing of plasmid-free cells. Continuous synthesis of the epsilon antitoxin is required to counteract the zeta toxin. This chain is Antitoxin epsilon 2, found in Enterococcus faecalis (Streptococcus faecalis).